Reading from the N-terminus, the 131-residue chain is Small ribosomal subunit protein uS8 (131 aa).

It belongs to the universal ribosomal protein uS8 family. Part of the 30S ribosomal subunit. Contacts proteins S5 and S12.

In terms of biological role, one of the primary rRNA binding proteins, it binds directly to 16S rRNA central domain where it helps coordinate assembly of the platform of the 30S subunit. The protein is Small ribosomal subunit protein uS8 of Polaromonas sp. (strain JS666 / ATCC BAA-500).